Reading from the N-terminus, the 108-residue chain is Holo-[acyl-carrier-protein] synthase (108 aa).

Positions 9 and 52 each coordinate Mg(2+).

It belongs to the P-Pant transferase superfamily. AcpS family. Requires Mg(2+) as cofactor.

The protein localises to the cytoplasm. It catalyses the reaction apo-[ACP] + CoA = holo-[ACP] + adenosine 3',5'-bisphosphate + H(+). Its function is as follows. Transfers the 4'-phosphopantetheine moiety from coenzyme A to a Ser of acyl-carrier-protein. The sequence is that of Holo-[acyl-carrier-protein] synthase from Coprothermobacter proteolyticus (strain ATCC 35245 / DSM 5265 / OCM 4 / BT).